The chain runs to 704 residues: Polyribonucleotide nucleotidyltransferase (704 aa).

Residues Asp-488 and Asp-494 each contribute to the Mg(2+) site. The KH domain occupies 555–614 (PRITTLKINPEKIRDVIGKGGATIRALTEETGTTIELEDDGTVKIASANGDATKEAIRRI). Residues 624–692 (GTIYNGKVVR…RQGRVRLSMK (69 aa)) enclose the S1 motif domain.

The protein belongs to the polyribonucleotide nucleotidyltransferase family. Component of the RNA degradosome, which is a multiprotein complex involved in RNA processing and mRNA degradation. Mg(2+) serves as cofactor.

It is found in the cytoplasm. The enzyme catalyses RNA(n+1) + phosphate = RNA(n) + a ribonucleoside 5'-diphosphate. In terms of biological role, involved in mRNA degradation. Catalyzes the phosphorolysis of single-stranded polyribonucleotides processively in the 3'- to 5'-direction. This is Polyribonucleotide nucleotidyltransferase from Shewanella sediminis (strain HAW-EB3).